The following is a 402-amino-acid chain: Multidrug resistance protein MdtH (402 aa).

The Cytoplasmic segment spans residues 1 to 12 (MSRVSQARNLGK). A helical transmembrane segment spans residues 13–33 (YFLLIDNMLVVLGFFVVFPLI). Topologically, residues 34–98 (SIRFVDQMGW…GFATMGIAHE (65 aa)) are periplasmic. Residues 99–116 (PWLLWFSCLLSGLGGTLF) form a helical membrane-spanning segment. Topologically, residues 117-138 (DPPRSALVVKLIRPQQRGRFFS) are cytoplasmic. A helical membrane pass occupies residues 139 to 159 (LLMMQDSASAVIGALLGSWLL). The Periplasmic portion of the chain corresponds to 160 to 164 (QYDFR). Residues 165–185 (LVCATGAVLFVLCAAFNAWLL) traverse the membrane as a helical segment. Topologically, residues 186–213 (PAWKLSTVRTPVREGMTRVMRDKRFVTY) are cytoplasmic. The helical transmembrane segment at 214–234 (VLTLAGYYMLAVQVMLMLPIM) threads the bilayer. Residues 235 to 243 (VNDVAGAPS) lie on the Periplasmic side of the membrane. Residues 244–264 (AVKWMYAIEACLSLTLLYPIA) traverse the membrane as a helical segment. The Cytoplasmic portion of the chain corresponds to 265–276 (RWSEKHFRLEHR). A helical membrane pass occupies residues 277–297 (LMAGLLIMSLSMMPVGMVSGL). Over 298–299 (QQ) the chain is Periplasmic. A helical transmembrane segment spans residues 300–320 (LFTLICLFYIGSIIAEPARET). The Cytoplasmic segment spans residues 321 to 339 (LSASLADARARGSYMGFSR). A helical membrane pass occupies residues 340–360 (LGLAIGGAIGYIGGGWLFDLG). Over 361–367 (KSAHQPE) the chain is Periplasmic. A helical transmembrane segment spans residues 368-388 (LPWMMLGIIGIFTFLALGWQF). The Cytoplasmic portion of the chain corresponds to 389–402 (SQKRAARRLLERDA).

It belongs to the major facilitator superfamily. DHA1 family. MdtH (TC 2.A.1.2.21) subfamily.

The protein resides in the cell inner membrane. This Shigella flexneri protein is Multidrug resistance protein MdtH.